Here is a 380-residue protein sequence, read N- to C-terminus: Chaperone protein DnaJ (380 aa).

One can recognise a J domain in the interval 5–70 (DFYDVLGVNR…QKRAAYDQYG (66 aa)). Residues 139 to 217 (GCEKQIRIPT…CHGAGRVKSQ (79 aa)) form a CR-type zinc finger. C152, C155, C169, C172, C191, C194, C205, and C208 together coordinate Zn(2+). 4 CXXCXGXG motif repeats span residues 152 to 159 (CSHCHGSG), 169 to 176 (CPTCGGAG), 191 to 198 (CPTCHGSG), and 205 to 212 (CNICHGAG).

The protein belongs to the DnaJ family. Homodimer. Requires Zn(2+) as cofactor.

The protein localises to the cytoplasm. Functionally, participates actively in the response to hyperosmotic and heat shock by preventing the aggregation of stress-denatured proteins and by disaggregating proteins, also in an autonomous, DnaK-independent fashion. Unfolded proteins bind initially to DnaJ; upon interaction with the DnaJ-bound protein, DnaK hydrolyzes its bound ATP, resulting in the formation of a stable complex. GrpE releases ADP from DnaK; ATP binding to DnaK triggers the release of the substrate protein, thus completing the reaction cycle. Several rounds of ATP-dependent interactions between DnaJ, DnaK and GrpE are required for fully efficient folding. Also involved, together with DnaK and GrpE, in the DNA replication of plasmids through activation of initiation proteins. In Laribacter hongkongensis (strain HLHK9), this protein is Chaperone protein DnaJ.